The sequence spans 157 residues: Ubiquitin-like protein 4A (157 aa).

The Ubiquitin-like domain maps to 1–76; the sequence is MQLTVKALQG…LNLVVKPLEK (76 aa). Lys-48 is covalently cross-linked (Glycyl lysine isopeptide (Lys-Gly) (interchain with G-Cter in ubiquitin)). The residue at position 90 (Ser-90) is a Phosphoserine. Residues 96–138 form a required and sufficient for interaction with BAG6 region; the sequence is WQLISKVLARHFSAADASRVLEQPQRDYERSLSRLTLDDIERL.

As to quaternary structure, component of the BAG6/BAT3 complex, at least composed of BAG6, UBL4A and GET4/TRC35. Interacts with BAG6; the interaction is direct and required for UBL4A protein stability. Interacts with USP13; may be indirect via BAG6. Post-translationally, polyubiquitinated. Ubiquitination by AMFR and deubiquitination by USP13 may regulate the interaction between the BAG6/BAT complex and SGTA and therefore may regulate client proteins fate.

The protein resides in the cytoplasm. It localises to the cytosol. The protein localises to the nucleus. Functionally, as part of a cytosolic protein quality control complex, the BAG6/BAT3 complex, maintains misfolded and hydrophobic patches-containing proteins in a soluble state and participates in their proper delivery to the endoplasmic reticulum or alternatively can promote their sorting to the proteasome where they undergo degradation. The BAG6/BAT3 complex is involved in the post-translational delivery of tail-anchored/type II transmembrane proteins to the endoplasmic reticulum membrane. Recruited to ribosomes, it interacts with the transmembrane region of newly synthesized tail-anchored proteins and together with SGTA and ASNA1 mediates their delivery to the endoplasmic reticulum. Client proteins that cannot be properly delivered to the endoplasmic reticulum are ubiquitinated and sorted to the proteasome. Similarly, the BAG6/BAT3 complex also functions as a sorting platform for proteins of the secretory pathway that are mislocalized to the cytosol either delivering them to the proteasome for degradation or to the endoplasmic reticulum. The BAG6/BAT3 complex also plays a role in the endoplasmic reticulum-associated degradation (ERAD), a quality control mechanism that eliminates unwanted proteins of the endoplasmic reticulum through their retrotranslocation to the cytosol and their targeting to the proteasome. It maintains these retrotranslocated proteins in an unfolded yet soluble state condition in the cytosol to ensure their proper delivery to the proteasome. This is Ubiquitin-like protein 4A (UBL4A) from Pongo abelii (Sumatran orangutan).